The sequence spans 276 residues: Type 2 phosphatidylinositol 4,5-bisphosphate 4-phosphatase (276 aa).

A compositionally biased stretch (basic and acidic residues) spans 1 to 10 (MAADGIDERS). Residues 1–27 (MAADGIDERSPLISPSSGNVTPTAPPY) are disordered. Over residues 13–27 (ISPSSGNVTPTAPPY) the composition is skewed to polar residues. Residue cysteine 106 is part of the active site. A CX5R motif motif is present at residues 106 to 112 (CKDISRR). 2 consecutive transmembrane segments (helical) span residues 211–231 (CCTY…LTVG) and 246–266 (WAVA…WGAI).

It is found in the late endosome membrane. Its subcellular location is the lysosome membrane. The enzyme catalyses a 1,2-diacyl-sn-glycero-3-phospho-(1D-myo-inositol-4,5-bisphosphate) + H2O = a 1,2-diacyl-sn-glycero-3-phospho-(1D-myo-inositol-5-phosphate) + phosphate. Its function is as follows. Catalyzes the hydrolysis of phosphatidylinositol-4,5-bisphosphate (PtdIns-4,5-P2) to phosphatidylinositol-4-phosphate (PtdIns-4-P). In Xenopus tropicalis (Western clawed frog), this protein is Type 2 phosphatidylinositol 4,5-bisphosphate 4-phosphatase (pip4p2).